Consider the following 277-residue polypeptide: Large ribosomal subunit protein uL2c (277 aa).

A disordered region spans residues 223–277 (VVMNPIDHPHGGGEGRAPIGRKKPLTPWGHPALGKRSRKNNKYSDTLILRRRKNS).

This sequence belongs to the universal ribosomal protein uL2 family. In terms of assembly, part of the 50S ribosomal subunit.

It localises to the plastid. The protein localises to the chloroplast. The protein is Large ribosomal subunit protein uL2c (rpl2) of Marchantia polymorpha (Common liverwort).